Here is a 140-residue protein sequence, read N- to C-terminus: C-type lectin 6 (140 aa).

The first 23 residues, 1–23, serve as a signal peptide directing secretion; the sequence is MGRLVFVSFGLLVVFLSLSGTGA. 3 cysteine pairs are disulfide-bonded: Cys-25-Cys-36, Cys-53-Cys-138, and Cys-115-Cys-130. The C-type lectin domain occupies 32 to 139; that stretch reads YEGHCYRVFQ…CSKTHNVICK (108 aa).

The protein belongs to the snaclec family. In terms of assembly, heteromultimer; disulfide-linked. As to expression, expressed by the venom gland.

It is found in the secreted. Functionally, interferes with one step of hemostasis (modulation of platelet aggregation, or coagulation cascade, for example). The protein is C-type lectin 6 of Crotalus adamanteus (Eastern diamondback rattlesnake).